Here is a 159-residue protein sequence, read N- to C-terminus: RNA pyrophosphohydrolase (159 aa).

In terms of domain architecture, Nudix hydrolase spans 6-149 (GFRPNVGIIL…KREVYRRALK (144 aa)). The Nudix box motif lies at 38-59 (GGINPDETPEDALYRELNEEVG).

Belongs to the Nudix hydrolase family. RppH subfamily. It depends on a divalent metal cation as a cofactor.

In terms of biological role, accelerates the degradation of transcripts by removing pyrophosphate from the 5'-end of triphosphorylated RNA, leading to a more labile monophosphorylated state that can stimulate subsequent ribonuclease cleavage. This is RNA pyrophosphohydrolase from Pseudomonas fluorescens (strain SBW25).